The sequence spans 445 residues: Histidinol dehydrogenase (445 aa).

NAD(+) contacts are provided by Tyr136, Gln200, and Asn228. Residues Thr251, Gln273, and His276 each contribute to the substrate site. Zn(2+) contacts are provided by Gln273 and His276. Catalysis depends on proton acceptor residues Glu342 and His343. Residues His343, Asp376, Glu430, and His435 each contribute to the substrate site. Asp376 provides a ligand contact to Zn(2+). Residue His435 coordinates Zn(2+).

This sequence belongs to the histidinol dehydrogenase family. Zn(2+) is required as a cofactor.

The catalysed reaction is L-histidinol + 2 NAD(+) + H2O = L-histidine + 2 NADH + 3 H(+). The protein operates within amino-acid biosynthesis; L-histidine biosynthesis; L-histidine from 5-phospho-alpha-D-ribose 1-diphosphate: step 9/9. Catalyzes the sequential NAD-dependent oxidations of L-histidinol to L-histidinaldehyde and then to L-histidine. The polypeptide is Histidinol dehydrogenase (hisD) (Mycolicibacterium smegmatis (Mycobacterium smegmatis)).